A 474-amino-acid chain; its full sequence is Sensor protein CreC (474 aa).

Over 1–6 (MRIGMR) the chain is Periplasmic. A helical membrane pass occupies residues 7–27 (LLLGYFLLVAVAAWFVLAIFV). The Cytoplasmic portion of the chain corresponds to 28–146 (KEVKPGVRRA…LQNPADPESS (119 aa)). A helical membrane pass occupies residues 147–167 (VMYVAAPIMDGSRLIGVLSVG). The Periplasmic portion of the chain corresponds to 168-183 (KPNAAMAPVIKRSERR). A helical transmembrane segment spans residues 184-204 (ILWASAILLGIALVIGAGMVW). In terms of domain architecture, HAMP spans 205–255 (WINRSIARLTRYADSVTDNKPVPLPDLGSSELRKLAQALESMRVKLEGKNY). Residues 205-474 (WINRSIARLT…ASLRLHRHFT (270 aa)) lie on the Cytoplasmic side of the membrane. The Histidine kinase domain maps to 262–473 (ALTHELKSPL…LASLRLHRHF (212 aa)). Residue H265 is modified to Phosphohistidine; by autocatalysis.

Post-translationally, autophosphorylated.

The protein localises to the cell inner membrane. It catalyses the reaction ATP + protein L-histidine = ADP + protein N-phospho-L-histidine.. Functionally, member of the two-component regulatory system CreC/CreB involved in catabolic regulation. CreC may function as a membrane-associated protein kinase that phosphorylates CreB in response to environmental signals. CreC can also phosphorylate PhoB. The polypeptide is Sensor protein CreC (creC) (Escherichia coli (strain K12)).